Here is a 713-residue protein sequence, read N- to C-terminus: Zinc finger and BTB domain-containing protein 1 (713 aa).

K3 is covalently cross-linked (Glycyl lysine isopeptide (Lys-Gly) (interchain with G-Cter in SUMO2)). The BTB domain maps to 24–91; it reads CDCCIAIDDI…MYLGKIMTAP (68 aa). Residues K200 and K205 each participate in a glycyl lysine isopeptide (Lys-Gly) (interchain with G-Cter in SUMO2) cross-link. The C2H2-type 1; atypical zinc-finger motif lies at 216-242; it reads FTCDSCGFGFSCEKLLDEHVLTCTNRH. Residues K261, K266, K276, K284, K304, K316, K328, K340, and K346 each participate in a glycyl lysine isopeptide (Lys-Gly) (interchain with G-Cter in SUMO2) cross-link. The tract at residues 270-319 is disordered; sequence AEKDSSKTFSAQPDKYREDANQAPDDSASTTGSRKSTVEAGIAGEEKSRA. S355 bears the Phosphoserine mark. At T356 the chain carries Phosphothreonine. K381 participates in a covalent cross-link: Glycyl lysine isopeptide (Lys-Gly) (interchain with G-Cter in SUMO2). The C2H2-type 2; atypical zinc finger occupies 448–470; that stretch reads CACGKCGQILVKGRQLQEHAQRC. Residue K528 forms a Glycyl lysine isopeptide (Lys-Gly) (interchain with G-Cter in SUMO2) linkage. The UBZ-type zinc-finger motif lies at 533–558; the sequence is PFRCPNCGQRFETENLVVEHMSSCLD. K563 participates in a covalent cross-link: Glycyl lysine isopeptide (Lys-Gly) (interchain with G-Cter in SUMO2). C2H2-type zinc fingers lie at residues 578–600, 606–628, 634–656, 662–684, and 686–709; these read HFCN…YTVH, FVCQ…NDMH, YVCS…MISH, TICQ…MDVH, and YTCG…NAKH.

In terms of assembly, homodimer. Homodimer. Interacts (via BTB domain) with TRIM28 (unphosphorylated or phosphorylated form). Post-translationally, sumoylated with SUMO2 at Lys-328 and to a lesser extent at Lys-266. Sumoylation inhibits its transcriptional repression activity and regulates its subcellular localization. Expressed strongly in thymus and spleen, less in lymph nodes and peripheral blood mononuclear cells (PBMCs) and weakly in bone marrow. Strongly expressed in immature, but weakly in mature bone marrow-lymphocyte B.

The protein resides in the nucleus. The protein localises to the nucleoplasm. In terms of biological role, acts as a transcriptional repressor. Represses cAMP-responsive element (CRE)-mediated transcriptional activation. In addition, has a role in translesion DNA synthesis. Requires for UV-inducible RAD18 loading, PCNA monoubiquitination, POLH recruitment to replication factories and efficient translesion DNA synthesis. Plays a key role in the transcriptional regulation of T lymphocyte development. This chain is Zinc finger and BTB domain-containing protein 1 (Zbtb1), found in Mus musculus (Mouse).